We begin with the raw amino-acid sequence, 662 residues long: Phosphomethylpyrimidine synthase (662 aa).

Substrate contacts are provided by residues Asn-235, Met-264, Tyr-293, His-329, 349–351 (SRG), 390–393 (DGMR), and Glu-429. His-433 contributes to the Zn(2+) binding site. Substrate is bound at residue Tyr-456. His-497 lines the Zn(2+) pocket. Residues Cys-577, Cys-580, and Cys-585 each contribute to the [4Fe-4S] cluster site.

It belongs to the ThiC family. Homodimer. [4Fe-4S] cluster is required as a cofactor.

It carries out the reaction 5-amino-1-(5-phospho-beta-D-ribosyl)imidazole + S-adenosyl-L-methionine = 4-amino-2-methyl-5-(phosphooxymethyl)pyrimidine + CO + 5'-deoxyadenosine + formate + L-methionine + 3 H(+). It functions in the pathway cofactor biosynthesis; thiamine diphosphate biosynthesis. In terms of biological role, catalyzes the synthesis of the hydroxymethylpyrimidine phosphate (HMP-P) moiety of thiamine from aminoimidazole ribotide (AIR) in a radical S-adenosyl-L-methionine (SAM)-dependent reaction. The polypeptide is Phosphomethylpyrimidine synthase (Shewanella halifaxensis (strain HAW-EB4)).